The following is a 324-amino-acid chain: Glycerol-3-phosphate dehydrogenase [NAD(P)+] (324 aa).

NADPH contacts are provided by S10, F11, R31, and K106. Residues K106, G134, and S136 each contribute to the sn-glycerol 3-phosphate site. A138 serves as a coordination point for NADPH. 5 residues coordinate sn-glycerol 3-phosphate: K189, D244, S254, R255, and N256. The Proton acceptor role is filled by K189. R255 is an NADPH binding site. The NADPH site is built by I279 and E281.

This sequence belongs to the NAD-dependent glycerol-3-phosphate dehydrogenase family.

It localises to the cytoplasm. The enzyme catalyses sn-glycerol 3-phosphate + NAD(+) = dihydroxyacetone phosphate + NADH + H(+). The catalysed reaction is sn-glycerol 3-phosphate + NADP(+) = dihydroxyacetone phosphate + NADPH + H(+). Its pathway is membrane lipid metabolism; glycerophospholipid metabolism. Catalyzes the reduction of the glycolytic intermediate dihydroxyacetone phosphate (DHAP) to sn-glycerol 3-phosphate (G3P), the key precursor for phospholipid synthesis. This chain is Glycerol-3-phosphate dehydrogenase [NAD(P)+], found in Ehrlichia canis (strain Jake).